We begin with the raw amino-acid sequence, 3124 residues long: MRTALCSAVAALCAAALLSSIEAEVNPPSDLNFTIIDEHNVQMSWKRPPDAIVGYRITVVPTNDGPTKEFTLSPSTTQTVLSDLIPEIEYVVSIASYDEVEESLPVFGQLTIQTGGPGIPEEKKVEAQIQKCSISAMTDLVFLVDGSWSVGRNNFRYILDFMVALVSAFDIGEEKTRVGVVQYSSDTRTEFNLNQYFRRSDLLDAIKRIPYKGGNTMTGEAIDYLVKNTFTESAGARKGFPKVAIVITDGKAQDEVEIPARELRNIGVEVFSLGIKAADAKELKLIASQPSLKHVFNVANFDGIVDIQNEIILQVCSGVDEQLGELVSGEEVVEPASNLVATQISSKSVRITWDPSTSQITGYRVQFIPMIAGGKQHVLSVGPQTTALNVKDLSPDTEYQINVYAMKGLTPSEPITIMEKTQQVKVQVECSRGVDVKADVVFLVDGSYSIGIANFVKVRAFLEVLVKSFEISPRKVQISLVQYSRDPHMEFSLNRYNRVKDIIQAINTFPYRGGSTNTGKAMTYVREKVFVTSKGSRPNVPRVMILITDGKSSDAFKEPAIKLRDADVEIFAVGVKDAVRTELEAIASPPAETHVYTVEDFDAFQRISFELTQSVCLRIEQELAAIRKKSYVPAKNMVFSDVTSDSFKVSWSAAGSEEKSYLIKYKVAIGGDEFIVSVPASSTSSVLTNLLPETTYAVSVIAEYEDGDGPPLDGEETTLEVKGAPRNLRITDETTDSFIVGWTPAPGNVLRYRLVYRPLTGGERRQVTVSANERSTTLRNLIPDTRYEVSVIAEYQSGPGNALNGYAKTDEVRGNPRNLRVSDATTSTTMKLSWSAAPGKVQHVLYNLHTRYAGVETKELTVKGDTTSKELKGLDEATRYALTVSALYASGAGEALSGEGETLEERGSPRNLITTDITDTTVGLSWTPAPGTVNNYRIVWKSLYDDTMGEKRVPGNTVDAVLDGLEPETKYRISIYAAYSSGEGDPVEGEAFTDVSQSARTVTVDNETENTMRVSVAALTWEGLVLARVLPNRSGGRQMFGKVNASATSIVLKRLKPRTTYDLSVVPIYDFGQGKSRKAEGTTASPFKPPRNLRTSDSTMSSFRVTWEPAPGRVKGYKVTFHPTEDDRNLGELVVGPYDSTVVLEELRAGTTYKVNVFGMFDGGESNPLVGQEMTTLSDTTTEPFLSRGLECRTRAEADIVLLVDGSWSIGRPNFKTVRNFISRIVEVFDIGPDKVQIGLAQYSGDPRTEWNLNAYRTKEALLDAVTNLPYKGGNTLTGMALDFILKNNFKQEAGLRPRARKIGVLITDGKSQDDVVTPSRRLRDEGVELYAIGIKNADENELKQIATDPDDIHAYNVADFSFLASIGEDVTTNLCNSVKGPGDLPPPSNLVISEVTPHSFRLRWSPPPESVDRYRVEYYPTTGGPPKQFYVSRMETTTVLKDLTPETEYIVNVFSVVEDESSEPLIGREITYPLSSVRNLNVYDIGSTSMRVRWEPVNGATGYLLTYEPVNATVPTTEKEMRVGPSVNEVQLVDLIPNTEYTLTAYVLYGDITSDPLTSQEVTLPLPGPRGVTIRDVTHSTMNVLWDPAPGKVRKYIIRYKIADEADVKEVEIDRLKTSTTLTDLSSQRLYNVKVVAVYDEGESLPVVASCYSAVPSPVNLRITEITKNSFRGTWDHGAPDVSLYRITWGPYGRSEKAESIVNGDVNSLLFENLNPDTLYEVSVTAIYPDESETVDDLIGSERTLPLVPITTPAPKSGPRNLQVYNATSHSLTVKWDPASGRVQRYKIIYQPINGDGPEQSTMVGGRQNSVVIQKLQPDTPYAITVSSMYADGEGGRMTGRGRTKPLTTVKNMLVYDPTTSTLNVRWDHAEGNPRQYKVFYRPTAGGAEEMTTVPGNTNYVILRSLEPNTPYTVTVVPVFPEGDGGRTTDTGRTLERGTPRNIQVYNPTPNSMNVRWEPAPGPVQQYRVNYSPLSGPRPSESIVVPANTRDVMLERLTPDTAYSINVIALYADGEGNPSQAQGRTLPRSGPRNLRVFDETTNSLSVQWDHADGPVQQYRIIYSPTVGDPIDEYTTVPGIRNNVILQPLQSDTPYKITVVAVYEDGDGGQLTGNGRTVGLLPPQNIYITDEWYTRFRVSWDPSPSPVLGYKIVYKPVGSNEPMEVFVGEVTSYTLHNLSPSTTYDVNVYAQYDSGMSIPLTDQGTTLYLNVTDLTTYKIGWDTFCIRWSPHRSATSYRLKLNPADGSRGQEITVRGSETSHCFTGLSPDTEYNATVFVQTPNLEGPPVSVREHTVLKPTEAPTPPPTPPPPPTIPPARDVCRGAKADIVFLTDASWSIGDDNFNKVVKFVFNTVGAFDLINPAGIQVSLVQYSDEAQSEFKLNTFDDKAQALGALQNVQYRGGNTRTGKALTFIKEKVLTWESGMRRGVPKVLVVVTDGRSQDEVRKAATVIQHSGFSVFVVGVADVDYNELAKIASKPSERHVFIVDDFDAFEKIQDNLVTFVCETATSTCPLIYLEGYTSPGFKMLESYNLTEKHFASVQGVSLESGSFPSYVAYRLHKNAFVSQPIREIHPEGLPQAYTIIMLFRLLPESPSEPFAIWQITDRDYKPQVGVVLDPGSKVLSFFNKDTRGEVQTVTFDNDEVKKIFYGSFHKVHIVVTSSNVKIYIDCSEILEKPIKEAGNITTDGYEILGKLLKGDRRSATLEIQNFDIVCSPVWTSRDRCCDLPSMRDEAKCPALPNACTCTQDSVGPPGPPGPPGGPGAKGPRGERGLTGSSGPPGPRGETGPPGPQGPPGPQGPNGLQIPGEPGRQGMKGDAGQPGLPGRSGTPGLPGPPGPVGPPGERGFTGKDGPTGPRGPPGPAGAPGVPGVAGPSGKPGKPGDRGTPGTPGMKGEKGDRGDIASQNMMRAVARQVCEQLINGQMSRFNQMLNQIPNDYYSNRNQPGPPGPPGPPGAAGTRGEPGPGGRPGFPGPPGVQGPPGERGMPGEKGERGTGSQGPRGLPGPPGPQGESRTGPPGSTGSRGPPGPPGRPGNAGIRGPPGPPGYCDSSQCASIPYNGQGFPEPYVPESGPYQPEGEPFIVPMESERREDEYEDYGVEMHSPEYPEHMRWKRSLSRKAKRKP.

Residues 1-23 (MRTALCSAVAALCAAALLSSIEA) form the signal peptide. The Fibronectin type-III 1 domain occupies 27 to 117 (PPSDLNFTII…GQLTIQTGGP (91 aa)). Asn32 is a glycosylation site (N-linked (GlcNAc...) asparagine). In terms of domain architecture, VWFA 1 spans 139 to 311 (DLVFLVDGSW…DGIVDIQNEI (173 aa)). Residue Ser328 is glycosylated (O-linked (Xyl...) (chondroitin sulfate) serine). The 90-residue stretch at 335 to 424 (PASNLVATQI…ITIMEKTQQV (90 aa)) folds into the Fibronectin type-III 2 domain. Residues 439 to 615 (DVVFLVDGSY…RISFELTQSV (177 aa)) enclose the VWFA 2 domain. Fibronectin type-III domains are found at residues 633–722 (PAKN…LEVK), 724–815 (APRN…VRGN), 816–906 (PRNL…LEER), 908–998 (SPRN…VSQS), 999–1087 (ARTV…ASPF), and 1089–1179 (PPRN…TLSD). Ser797, Ser890, and Ser981 each carry an O-linked (Xyl...) (chondroitin sulfate) serine glycan. Residues Asn1006, Asn1032, and Asn1044 are each glycosylated (N-linked (GlcNAc...) asparagine). Residues 1075 to 1100 (KSRKAEGTTASPFKPPRNLRTSDSTM) are disordered. Residues 1199 to 1371 (DIVLLVDGSW…SFLASIGEDV (173 aa)) enclose the VWFA 3 domain. 10 consecutive Fibronectin type-III domains span residues 1387-1476 (PPSN…YPLS), 1477-1568 (SVRN…LPLP), 1569-1659 (GPRG…VPSP), 1660-1756 (VNLR…TPAP), 1759-1853 (GPRN…TVKN), 1854-1939 (MLVY…LERG), 1940-2030 (TPRN…LPRS), 2031-2121 (GPRN…VGLL), 2122-2210 (PPQN…LYLN), and 2211-2299 (VTDL…LKPT). The N-linked (GlcNAc...) asparagine glycan is linked to Asn1512. N-linked (GlcNAc...) asparagine glycosylation occurs at Asn1767. N-linked (GlcNAc...) asparagine glycosylation is found at Asn2210 and Asn2273. Residues 2327 to 2500 (DIVFLTDASW…DAFEKIQDNL (174 aa)) enclose the VWFA 4 domain. Positions 2455–2750 (SGFSVFVVGV…NACTCTQDSV (296 aa)) are nonhelical region (NC3). Residues 2524–2716 (GFKMLESYNL…IQNFDIVCSP (193 aa)) enclose the Laminin G-like domain. Residues Asn2532 and Asn2683 are each glycosylated (N-linked (GlcNAc...) asparagine). 2 disordered regions span residues 2749–2900 (SVGP…GDRG) and 2935–3080 (PNDY…EGEP). Collagen-like domains are found at residues 2751-2802 (GPPG…GPNG), 2807-2858 (GEPG…GPRG), and 2859-2900 (PPGP…GDRG). The interval 2751–2902 (GPPGPPGPPG…KGEKGDRGDI (152 aa)) is triple-helical region (COL2) with 1 imperfection. Composition is skewed to pro residues over residues 2752-2761 (PPGPPGPPGG) and 2788-2798 (PPGPQGPPGPQ). Residues 2821 to 2830 (PGLPGRSGTP) show a composition bias toward low complexity. Over residues 2832-2841 (LPGPPGPVGP) the composition is skewed to pro residues. Low complexity-rich tracts occupy residues 2842-2854 (PGERGFTGKDGPT) and 2865-2878 (APGVPGVAGPSGKP). Positions 2899 to 2901 (RGD) match the Cell attachment site motif. The interval 2903 to 2945 (ASQNMMRAVARQVCEQLINGQMSRFNQMLNQIPNDYYSNRNQP) is nonhelical region (NC2). A compositionally biased stretch (polar residues) spans 2935-2944 (PNDYYSNRNQ). Positions 2945–2954 (PGPPGPPGPP) are enriched in pro residues. Residues 2945–2994 (PGPPGPPGPPGAAGTRGEPGPGGRPGFPGPPGVQGPPGERGMPGEKGERG) form the Collagen-like 4 domain. The triple-helical region (COL1) with 2 imperfections stretch occupies residues 2946-3048 (GPPGPPGPPG…RGPPGPPGYC (103 aa)). Positions 2961–2970 (GEPGPGGRPG) are enriched in gly residues. Over residues 3010–3024 (QGESRTGPPGSTGSR) the composition is skewed to low complexity. A nonhelical region (NC1) region spans residues 3049-3124 (DSSQCASIPY…SLSRKAKRKP (76 aa)).

Belongs to the fibril-associated collagens with interrupted helices (FACIT) family. Trimer of identical chains each containing 190 kDa of non-triple-helical sequences. In terms of processing, the triple-helical tail is stabilized by disulfide bonds at each end. Post-translationally, prolines at the third position of the tripeptide repeating unit (G-X-Y) are hydroxylated in some or all of the chains. O-glycosylated; glycosaminoglycan of chondroitin-sulfate type. In terms of tissue distribution, type XII collagen is present in tendons, ligaments, perichondrium, and periosteum, all dense connective tissues containing type I collagen.

It is found in the secreted. The protein resides in the extracellular space. The protein localises to the extracellular matrix. Functionally, type XII collagen interacts with type I collagen-containing fibrils, the COL1 domain could be associated with the surface of the fibrils, and the COL2 and NC3 domains may be localized in the perifibrillar matrix. The protein is Collagen alpha-1(XII) chain (COL12A1) of Gallus gallus (Chicken).